We begin with the raw amino-acid sequence, 368 residues long: DNA replication and repair protein RecF (368 aa).

30–37 is a binding site for ATP; the sequence is GRNGSGKT.

Belongs to the RecF family.

Its subcellular location is the cytoplasm. Functionally, the RecF protein is involved in DNA metabolism; it is required for DNA replication and normal SOS inducibility. RecF binds preferentially to single-stranded, linear DNA. It also seems to bind ATP. This is DNA replication and repair protein RecF from Chlorobaculum parvum (strain DSM 263 / NCIMB 8327) (Chlorobium vibrioforme subsp. thiosulfatophilum).